A 174-amino-acid polypeptide reads, in one-letter code: NAD(P)H-quinone oxidoreductase subunit J (174 aa).

The protein belongs to the complex I 30 kDa subunit family. As to quaternary structure, NDH-1 can be composed of about 15 different subunits; different subcomplexes with different compositions have been identified which probably have different functions.

The protein localises to the cellular thylakoid membrane. The enzyme catalyses a plastoquinone + NADH + (n+1) H(+)(in) = a plastoquinol + NAD(+) + n H(+)(out). The catalysed reaction is a plastoquinone + NADPH + (n+1) H(+)(in) = a plastoquinol + NADP(+) + n H(+)(out). Its function is as follows. NDH-1 shuttles electrons from an unknown electron donor, via FMN and iron-sulfur (Fe-S) centers, to quinones in the respiratory and/or the photosynthetic chain. The immediate electron acceptor for the enzyme in this species is believed to be plastoquinone. Couples the redox reaction to proton translocation, and thus conserves the redox energy in a proton gradient. Cyanobacterial NDH-1 also plays a role in inorganic carbon-concentration. This Picosynechococcus sp. (strain ATCC 27264 / PCC 7002 / PR-6) (Agmenellum quadruplicatum) protein is NAD(P)H-quinone oxidoreductase subunit J.